Consider the following 188-residue polypeptide: Acireductone dioxygenase (188 aa).

4 residues coordinate Fe(2+): His97, His99, Glu103, and His141. Residues His97, His99, Glu103, and His141 each coordinate Ni(2+).

This sequence belongs to the acireductone dioxygenase (ARD) family. As to quaternary structure, monomer. The cofactor is Fe(2+). It depends on Ni(2+) as a cofactor.

It carries out the reaction 1,2-dihydroxy-5-(methylsulfanyl)pent-1-en-3-one + O2 = 3-(methylsulfanyl)propanoate + CO + formate + 2 H(+). The enzyme catalyses 1,2-dihydroxy-5-(methylsulfanyl)pent-1-en-3-one + O2 = 4-methylsulfanyl-2-oxobutanoate + formate + 2 H(+). It participates in amino-acid biosynthesis; L-methionine biosynthesis via salvage pathway; L-methionine from S-methyl-5-thio-alpha-D-ribose 1-phosphate: step 5/6. In terms of biological role, catalyzes 2 different reactions between oxygen and the acireductone 1,2-dihydroxy-3-keto-5-methylthiopentene (DHK-MTPene) depending upon the metal bound in the active site. Fe-containing acireductone dioxygenase (Fe-ARD) produces formate and 2-keto-4-methylthiobutyrate (KMTB), the alpha-ketoacid precursor of methionine in the methionine recycle pathway. Ni-containing acireductone dioxygenase (Ni-ARD) produces methylthiopropionate, carbon monoxide and formate, and does not lie on the methionine recycle pathway. This Xanthomonas axonopodis pv. citri (strain 306) protein is Acireductone dioxygenase.